Here is a 197-residue protein sequence, read N- to C-terminus: Rac-like GTP-binding protein ARAC6 (197 aa).

A GTP-binding site is contributed by 13-20; the sequence is GDGAVGKT. Residues 35-43 carry the Effector region motif; the sequence is YVPTVFDNF. Residues 60-64 and 118-121 contribute to the GTP site; these read DTAGQ and TKLD. S160 contributes to the GDP binding site. C194 is subject to Cysteine methyl ester. C194 is lipidated: S-geranylgeranyl cysteine. A propeptide spans 195–197 (removed in mature form); that stretch reads SIL.

The protein belongs to the small GTPase superfamily. Rho family. In terms of assembly, interacts with SPK1. In terms of tissue distribution, ubiquitous. Preferentially expressed in mature pollen and pollen tubes.

It is found in the cytoplasm. It localises to the membrane. May be involved in cell polarity control during the actin-dependent tip growth of pollen tubes. Functionally, inactive GDP-bound Rho GTPases reside in the cytosol, are found in a complex with Rho GDP-dissociation inhibitors (Rho GDIs), and are released from the GDI protein in order to translocate to membranes upon activation. This is Rac-like GTP-binding protein ARAC6 (ARAC6) from Arabidopsis thaliana (Mouse-ear cress).